The primary structure comprises 464 residues: L-cysteine desulfhydrase-like protein lolT2 (464 aa).

Position 227 is an N6-(pyridoxal phosphate)lysine (lysine 227).

It belongs to the class-V pyridoxal-phosphate-dependent aminotransferase family. Requires pyridoxal 5'-phosphate as cofactor.

It functions in the pathway alkaloid biosynthesis. L-cysteine desulfhydrase-like protein; part of the gene cluster that mediates the biosynthesis of loline alkaloids, potent insecticidal agents composed of a pyrrolizidine ring system and an uncommon ether bridge linking carbons 2 and 7. Lolines are structurally differentiated by the various modifications of the L-amino group and include norloline, loline, N-methylloline, N-acetylloline, N-acetylnorloline, and N-formylloline. The first committed step is the condensation of O-acetyl-L-homoserine (derived from L-aspartic acid) and L-proline, probably catalyzed by the gamma-type pyridoxal 5'-phosphate(PLP)-dependent enzyme lolC, to give the diamino diacid, NACPP. Ensuing cyclization, decarboxylation, and acetylation steps yield 1-exo-acetamidopyrrolizidine (AcAP). LolO is required for installation of the ether bridge upon the pathway intermediate, 1-exo-acetamidopyrrolizidine (AcAP). In sequential 2-oxoglutarate- and O(2)-consuming steps, lolO removes hydrogens from C2 and C7 of AcAP to form both carbon-oxygen bonds in N-acetylnorloline (NANL), the precursor to all other lolines. The enzymes lolD, lolE, lolF and lolT have also been proposed to be involved in the ether-bridge installation. Further processing of the exocyclic moiety of NANL by fungal N-acetamidase (LolN), methyltransferase (LolM), and cytochrome P450 (LolP) enzymes, with occasional involvement of a plant acetyltransferase, generates the other known lolines. LolN transforms NANL to norlonine which is monomethylated and dimethylated to respectively lonine and N-methyllonine (NML) by lolM. LolP catalyzes hydroxylation of the methyl group in N-methylloline (NML) and further oxygenation to N-formylloline (NFL). A plant acetyltransferase is responsible for the acetylation of loline to form N-acetylloline (NAL). LolA might interact with aspartate kinase to prevent feedback inhibition of its activity by these end products and thereby promote production of L-homoserine from L-aspartate. This Epichloe uncinata (Endophyte fungus) protein is L-cysteine desulfhydrase-like protein lolT2.